We begin with the raw amino-acid sequence, 108 residues long: UPF0145 protein SYNPCC7002_A1337 (108 aa).

Belongs to the UPF0145 family.

The chain is UPF0145 protein SYNPCC7002_A1337 from Picosynechococcus sp. (strain ATCC 27264 / PCC 7002 / PR-6) (Agmenellum quadruplicatum).